A 98-amino-acid polypeptide reads, in one-letter code: Integration host factor subunit beta (98 aa).

Belongs to the bacterial histone-like protein family. As to quaternary structure, heterodimer of an alpha and a beta chain.

Functionally, this protein is one of the two subunits of integration host factor, a specific DNA-binding protein that functions in genetic recombination as well as in transcriptional and translational control. The chain is Integration host factor subunit beta from Pseudomonas putida (strain GB-1).